The sequence spans 142 residues: Large ribosomal subunit protein uL13 (142 aa).

The protein belongs to the universal ribosomal protein uL13 family. In terms of assembly, part of the 50S ribosomal subunit.

Functionally, this protein is one of the early assembly proteins of the 50S ribosomal subunit, although it is not seen to bind rRNA by itself. It is important during the early stages of 50S assembly. In Teredinibacter turnerae (strain ATCC 39867 / T7901), this protein is Large ribosomal subunit protein uL13.